Consider the following 274-residue polypeptide: NH(3)-dependent NAD(+) synthetase (274 aa).

46 to 53 (GISGGQDS) lines the ATP pocket. Position 52 (Asp52) interacts with Mg(2+). A deamido-NAD(+)-binding site is contributed by Arg140. Thr160 lines the ATP pocket. Glu165 contacts Mg(2+). Residues Lys173 and Asp180 each contribute to the deamido-NAD(+) site. Positions 189 and 211 each coordinate ATP. Residue 260 to 261 (HK) participates in deamido-NAD(+) binding.

This sequence belongs to the NAD synthetase family. Homodimer.

It catalyses the reaction deamido-NAD(+) + NH4(+) + ATP = AMP + diphosphate + NAD(+) + H(+). It participates in cofactor biosynthesis; NAD(+) biosynthesis; NAD(+) from deamido-NAD(+) (ammonia route): step 1/1. Catalyzes the ATP-dependent amidation of deamido-NAD to form NAD. Uses ammonia as a nitrogen source. This Pectobacterium carotovorum subsp. carotovorum (strain PC1) protein is NH(3)-dependent NAD(+) synthetase.